Reading from the N-terminus, the 137-residue chain is uncharacterized protein (137 aa).

A signal peptide spans 1 to 34 (MAALSRALGPLRTPAPPLWIGLFLVATGSQQSLA). The span at 33–45 (LAQPLPGNTTEAT) shows a compositional bias: polar residues. 2 disordered regions span residues 33–54 (LAQP…ASGS) and 98–137 (VLSP…LGAS). N-linked (GlcNAc...) asparagine glycosylation occurs at Asn-40. The span at 121–137 (KLKEPQPQDHKPGLGAS) shows a compositional bias: basic and acidic residues.

The protein resides in the secreted. This is an uncharacterized protein from Homo sapiens (Human).